The sequence spans 482 residues: Glutamate--tRNA ligase (482 aa).

A 'HIGH' region motif is present at residues 9-19 (PSPTGPLHIGG). Positions 250-254 (KMSKR) match the 'KMSKS' region motif. Lysine 253 contributes to the ATP binding site.

It belongs to the class-I aminoacyl-tRNA synthetase family. Glutamate--tRNA ligase type 1 subfamily. In terms of assembly, monomer.

It is found in the cytoplasm. The enzyme catalyses tRNA(Glu) + L-glutamate + ATP = L-glutamyl-tRNA(Glu) + AMP + diphosphate. Its function is as follows. Catalyzes the attachment of glutamate to tRNA(Glu) in a two-step reaction: glutamate is first activated by ATP to form Glu-AMP and then transferred to the acceptor end of tRNA(Glu). This Desulforamulus reducens (strain ATCC BAA-1160 / DSM 100696 / MI-1) (Desulfotomaculum reducens) protein is Glutamate--tRNA ligase.